Here is a 496-residue protein sequence, read N- to C-terminus: Cytochrome P450 71B14 (496 aa).

The helical transmembrane segment at 1 to 21 (MIWWFIVGASFFFAFILIAKD) threads the bilayer. Cys-436 lines the heme pocket.

Belongs to the cytochrome P450 family. Heme serves as cofactor.

The protein resides in the membrane. The protein is Cytochrome P450 71B14 (CYP71B14) of Arabidopsis thaliana (Mouse-ear cress).